The sequence spans 486 residues: Patatin-like phospholipase domain-containing protein 2 (486 aa).

Topologically, residues 1–8 (MFPKETTW) are cytoplasmic. A helical transmembrane segment spans residues 9–29 (NISFAGCGFLGVYHIGVASCL). In terms of domain architecture, PNPLA spans 10–179 (ISFAGCGFLG…SDNLPLYELK (170 aa)). The short motif at 14-19 (GCGFLG) is the GXGXXG element. At 30–42 (REHAPFLVANATH) the chain is on the extracellular side. The N-linked (GlcNAc...) asparagine glycan is linked to N39. The chain crosses the membrane as a helical span at residues 43–63 (IYGASAGALTATALVTGACLG). The GXSXG motif lies at 45–49 (GASAG). S47 (nucleophile) is an active-site residue. The Cytoplasmic segment spans residues 64 to 137 (EAGANIIEVS…IITHFNSKEE (74 aa)). K92 is covalently cross-linked (Glycyl lysine isopeptide (Lys-Gly) (interchain with G-Cter in ubiquitin)). The chain crosses the membrane as a helical span at residues 138 to 158 (LIQANVCSTFIPVYCGLIPPS). Residues 159–334 (LQGVRYVDGG…TTLSNMLPVR (176 aa)) lie on the Extracellular side of the membrane. The active-site Proton acceptor is the D166. The DGA/G motif lies at 166–168 (DGG). Residues 335-355 (LAMAMMVPYTLPLESAVSFTI) form a helical membrane-spanning segment. Topologically, residues 356-486 (RLLEWLPDVP…PQHPPSSPPC (131 aa)) are cytoplasmic. The residue at position 377 (S377) is a Phosphoserine; in vitro. Phosphoserine; by PKA is present on residues S399 and S409. S433 is subject to Phosphoserine; in vitro.

As to quaternary structure, interacts with ABHD5; this association stimulates PNPLA2 triglyceride hydrolase activity. Interacts with SERPINF1; this interaction stimulates the phospholipase A2 activity of PNPLA2. Despite a colocalization in lipid droplets, it probably does not interact with PLIN. Interacts with PLIN5; prevents interaction with ABHD5. Interacts with FAF2. In terms of processing, phosphorylation at Ser-409 by PKA is increased during fasting and moderate intensity exercise, and moderately increases lipolytic activity. Ubiquitinated by PEX2 in response to reactive oxygen species (ROS), leading to its degradation. Ubiquitination is stimulated by LDAH.

The protein resides in the lipid droplet. It localises to the cell membrane. Its subcellular location is the cytoplasm. It catalyses the reaction a triacylglycerol + H2O = a diacylglycerol + a fatty acid + H(+). The enzyme catalyses a triacylglycerol + H2O = a 1,2-diacylglycerol + a fatty acid + H(+). The catalysed reaction is a triacylglycerol + H2O = a 1,3-diacylglycerol + a fatty acid + H(+). It carries out the reaction a triacyl-sn-glycerol + H2O = a 1,3-diacyl-sn-glycerol + a fatty acid + H(+). It catalyses the reaction a triacyl-sn-glycerol + H2O = a 2,3-diacyl-sn-glycerol + a fatty acid + H(+). The enzyme catalyses a 1-acylglycerol + a 1,3-diacylglycerol = a triacylglycerol + glycerol. The catalysed reaction is a 1-acylglycerol + a 1,2-diacylglycerol = a triacylglycerol + glycerol. It carries out the reaction 2 a 1-acylglycerol = a 1,2-diacylglycerol + glycerol. It catalyses the reaction a triacylglycerol + all-trans-retinol = an all-trans-retinyl ester + a diacylglycerol. The enzyme catalyses 1,2-di-(9Z-octadecenoyl)-glycerol + (9Z)-octadecenoate + H(+) = 1,2,3-tri-(9Z-octadecenoyl)-glycerol + H2O. The catalysed reaction is 1,2,3-tri-(9Z-octadecenoyl)-glycerol + H2O = 1,3-di-(9Z-octadecenoyl)-glycerol + (9Z)-octadecenoate + H(+). It carries out the reaction 1-(9Z-octadecenoyl)-glycerol + 1,3-di-(9Z-octadecenoyl)-glycerol = 1,2,3-tri-(9Z-octadecenoyl)-glycerol + glycerol. It catalyses the reaction 1-(9Z-octadecenoyl)-glycerol + 1,2-di-(9Z-octadecenoyl)-glycerol = 1,2,3-tri-(9Z-octadecenoyl)-glycerol + glycerol. The enzyme catalyses 2 1-(9Z-octadecenoyl)-glycerol = 1,2-di-(9Z-octadecenoyl)-glycerol + glycerol. The catalysed reaction is 1,2,3-tri-(9Z-octadecenoyl)-glycerol + all-trans-retinol = all-trans-retinyl 9Z-octadecenoate + di-(9Z)-octadecenoylglycerol. It carries out the reaction 1,2,3-tri-(9Z)-hexadecenoylglycerol + H2O = 1,3-di-(9Z)-hexadecenoylglycerol + (9Z)-hexadecenoate + H(+). It catalyses the reaction 1,2,3-tri-(9Z,12Z)-octadecadienoylglycerol + H2O = 1,3-di-(9Z,12Z)-octadecadienoylglycerol + (9Z,12Z)-octadecadienoate + H(+). The enzyme catalyses 1,2,3-tri-(9Z,12Z,15Z)-octadecatrienoylglycerol + H2O = 1,3-di-(9Z,12Z,15Z)-octadecatrienoylglycerol + (9Z,12Z,15Z)-octadecatrienoate + H(+). The catalysed reaction is 1,3-di-(9Z)-octadecenoyl-2-hexadecanoylglycerol + H2O = 1,3-di-(9Z-octadecenoyl)-glycerol + hexadecanoate + H(+). It carries out the reaction 1,2-di-(9Z)-octadecenoyl-3-hexadecanoyl-sn-glycerol + H2O = 1-(9Z)-octadecenoyl-3-hexadecanoyl-sn-glycerol + (9Z)-octadecenoate + H(+). It catalyses the reaction 1-hexadecanoyl-2,3-di-(9Z)-octadecenoyl-sn-glycerol + H2O = 1-hexadecanoyl-3-(9Z)-octadecenoyl-sn-glycerol + (9Z)-octadecenoate + H(+). The enzyme catalyses 1,2,3-tri-(9Z-octadecenoyl)-glycerol + H2O = 2,3-di-(9Z)-octadecenoyl-sn-glycerol + (9Z)-octadecenoate + H(+). The catalysed reaction is 1,2,3-tri-(9Z)-hexadecenoylglycerol + H2O = 2,3-di-(9Z)-hexadecenoyl-sn-glycerol + (9Z)-hexadecenoate + H(+). It carries out the reaction 1,2,3-tri-(9Z,12Z)-octadecadienoylglycerol + H2O = 2,3-di-(9Z,12Z)-octadecadienoyl-sn-glycerol + (9Z,12Z)-octadecadienoate + H(+). It catalyses the reaction 1,2,3-tri-(9Z,12Z,15Z)-octadecatrienoylglycerol + H2O = 2,3-di-(9Z,12Z,15Z)-octadecatrienoyl-sn-glycerol + (9Z,12Z,15Z)-octadecatrienoate + H(+). The enzyme catalyses 1,3-di-(9Z)-octadecenoyl-2-hexadecanoylglycerol + H2O = 2-hexadecanoyl-3-(9Z)-octadecenoyl-sn-glycerol + (9Z)-octadecenoate + H(+). The catalysed reaction is 1-hexadecanoyl-2,3-di-(9Z)-octadecenoyl-sn-glycerol + H2O = 2,3-di-(9Z)-octadecenoyl-sn-glycerol + hexadecanoate + H(+). It carries out the reaction 1,2-di-(9Z)-octadecenoyl-3-hexadecanoyl-sn-glycerol + H2O = 2-(9Z-octadecenoyl)-3-hexadecanoyl-sn-glycerol + (9Z)-octadecenoate + H(+). It catalyses the reaction a 1,2-diacyl-sn-glycero-3-phosphocholine + H2O = a 1-acyl-sn-glycero-3-phosphocholine + a fatty acid + H(+). The enzyme catalyses 1,2,3-tri-(9Z-octadecenoyl)-glycerol + 9-hydroxy-octadecanoate = 9-(9Z-octadecenoyloxy)-octadecanoate + 2,3-di-(9Z)-octadecenoyl-sn-glycerol. The catalysed reaction is 1-hexadecanoyl-2,3-di-(9Z)-octadecenoyl-sn-glycerol + 9-hydroxy-octadecanoate = 9-hexadecanoyloxy-octadecanoate + 2,3-di-(9Z)-octadecenoyl-sn-glycerol. It carries out the reaction 1,2,3-tri-(10Z)-heptadecenoylglycerol + 9-hydroxy-octadecanoate = 2,3-di-(10Z-heptadecenoyl)-sn-glycerol + 9-(10Z-heptadecenoyloxy)-octadecanoate. It catalyses the reaction 1,2,3-tri-(9Z,12Z)-octadecadienoylglycerol + 9-hydroxy-octadecanoate = 2,3-di-(9Z,12Z)-octadecadienoyl-sn-glycerol + 9-(9Z,12Z-octadecadienoyloxy)-octadecanoate. The enzyme catalyses 1,2,3-tri-(9Z)-hexadecenoylglycerol + 9-hydroxy-octadecanoate = 2,3-di-(9Z)-hexadecenoyl-sn-glycerol + 9-(9Z-hexadecenoyloxy)-octadecanoate. The catalysed reaction is 9-hydroxy-octadecanoate + 1,2-di-(9Z-octadecenoyl)-sn-glycerol = 9-(9Z-octadecenoyloxy)-octadecanoate + 2-(9Z-octadecenoyl)-glycerol. It carries out the reaction 1-hexadecanoyl-2,3-di-(9Z)-octadecenoyl-sn-glycerol + 9-hydroxy-octadecanoate = 1-hexadecanoyl-3-(9Z)-octadecenoyl-sn-glycerol + 9-(9Z-octadecenoyloxy)-octadecanoate. Its pathway is glycerolipid metabolism; triacylglycerol degradation. Its function is as follows. Catalyzes the initial step in triglyceride hydrolysis in adipocyte and non-adipocyte lipid droplets. Exhibits a strong preference for the hydrolysis of long-chain fatty acid esters at the sn-2 position of the glycerol backbone and acts coordinately with LIPE/HLS and DGAT2 within the lipolytic cascade. Also possesses acylglycerol transacylase and phospholipase A2 activities. Transfers fatty acid from triglyceride to retinol, hydrolyzes retinylesters, and generates 1,3-diacylglycerol from triglycerides. Regulates adiposome size and may be involved in the degradation of adiposomes. Catalyzes the formation of an ester bond between hydroxy fatty acids and fatty acids derived from triglycerides or diglycerides to generate fatty acid esters of hydroxy fatty acids (FAHFAs) in adipocytes. Acts antagonistically with LDAH in regulation of cellular lipid stores. Inhibits LDAH-stimulated lipid droplet fusion. May play an important role in energy homeostasis. May play a role in the response of the organism to starvation, enhancing hydrolysis of triglycerides and providing free fatty acids to other tissues to be oxidized in situations of energy depletion. This chain is Patatin-like phospholipase domain-containing protein 2 (PNPLA2), found in Bos taurus (Bovine).